Reading from the N-terminus, the 168-residue chain is Mitochondrial ATP-independent inner membrane protease subunit 1a (168 aa).

The N-terminal 47 residues, 1–47 (MRMTFLSYLKQWRGTAKEAFENVSIVAKFLCLLHVTDRYIISTTHVH), are a transit peptide targeting the mitochondrion. Active-site residues include serine 50 and lysine 94.

It belongs to the peptidase S26 family. IMP1 subfamily. Heterodimer of 2 subunits, IMP1A/B and IMP12.

The protein localises to the mitochondrion inner membrane. Functionally, catalyzes the removal of transit peptides required for the targeting of proteins from the mitochondrial matrix, across the inner membrane, into the inter-membrane space. The chain is Mitochondrial ATP-independent inner membrane protease subunit 1a from Arabidopsis thaliana (Mouse-ear cress).